The primary structure comprises 504 residues: Facilitated trehalose transporter Tret1 (504 aa).

The Cytoplasmic segment spans residues 1 to 39 (MELNNKEDSPRHTVPFVRQITEDGKAKLEIYRPTTNPIY). Residues 40–60 (IYTQILAAIAVSMGSMVVGFA) form a helical membrane-spanning segment. Over 61–87 (SAYTSPALVSMQNTTITSFKVTEQEAS) the chain is Extracellular. Asn-73 is a glycosylation site (N-linked (GlcNAc...) asparagine). A helical transmembrane segment spans residues 88–108 (WVGGIMPLAGLAGGIAGGPFI). At 109–120 (EYLGRKNTILAT) the chain is on the cytoplasmic side. Residues 121-141 (AVPFIVAWLLIAFANSIWMVL) traverse the membrane as a helical segment. At 142 to 145 (AGRA) the chain is on the extracellular side. Residues 146–166 (LSGFCVGIASLSLPVYLGETV) form a helical membrane-spanning segment. Over 167-171 (QPEVR) the chain is Cytoplasmic. The helical transmembrane segment at 172 to 192 (GTLGLLPTAFGNIGILICFVA) threads the bilayer. The Extracellular segment spans residues 193 to 199 (GKYVNWS). An N-linked (GlcNAc...) asparagine glycan is attached at Asn-197. The helical transmembrane segment at 200–220 (GLAFIGSILPIPFMVLTLLIP) threads the bilayer. At 221 to 283 (ETPRWFVTRG…DLMKRSNLKP (63 aa)) the chain is on the cytoplasmic side. A helical membrane pass occupies residues 284 to 304 (LLIALGLMFFQQLSGINAVIF). The Extracellular portion of the chain corresponds to 305–320 (YTVSIFKDAGSTIDEN). A helical transmembrane segment spans residues 321–341 (LCTIIVGVVNFGATFFATVLI). Residues 342–347 (DRLGRK) are Cytoplasmic-facing. A helical transmembrane segment spans residues 348–368 (ILLYISEVAMVITLLTLGTFF). The Extracellular portion of the chain corresponds to 369–387 (YYKNSGNDVSNIGWLPLAS). A helical transmembrane segment spans residues 388–408 (FVIYVIGFSSGVGPIPWLMLG). The Cytoplasmic portion of the chain corresponds to 409-424 (EILPGKIRGSAASVAT). The chain crosses the membrane as a helical span at residues 425-445 (GFNWTCTFIVTKTFADIVAAI). Residues 446-448 (GNH) are Extracellular-facing. A helical transmembrane segment spans residues 449-469 (GAFWFFGVICLIGLFFVIFFV). The Cytoplasmic segment spans residues 470 to 504 (PETQGKSLEEIERKMMGRVRRMSSVANMKPLSFNM).

Belongs to the major facilitator superfamily. Sugar transporter (TC 2.A.1.1) family. Trehalose transporter subfamily. In terms of tissue distribution, highest expression in the fat body. Not expressed in other tissues including the midgut, muscle, and integuments after 24 hours of dehydration.

Its subcellular location is the cell membrane. In terms of biological role, high-capacity facilitative transporter for trehalose, required to induce anhydrobiosis. Anhydrobiotic larvae can survive almost complete dehydration. Does not transport maltose, sucrose or lactose. Mediates the bidirectional transfer of trehalose. Responsible for the transport of trehalose synthesized in the fat body and the incorporation of trehalose into other tissues that require a carbon source, thereby regulating trehalose levels in the hemolymph. In Polypedilum vanderplanki (Sleeping chironomid midge), this protein is Facilitated trehalose transporter Tret1.